The chain runs to 126 residues: Histone H2B 5 (126 aa).

Residues 1–12 (MPEPAKSAPAPK) show a composition bias toward low complexity. The tract at residues 1–35 (MPEPAKSAPAPKKGSKKAVTKTQKKGDKKRRKSRK) is disordered. Residues Lys-6 and Lys-13 each carry the N6-acetyllysine modification. The segment covering 13–34 (KGSKKAVTKTQKKGDKKRRKSR) has biased composition (basic residues). A Phosphoserine modification is found at Ser-15. Residues Lys-16 and Lys-21 each carry the N6-acetyllysine modification. O-linked (GlcNAc) serine glycosylation is present at Ser-113. A Glycyl lysine isopeptide (Lys-Gly) (interchain with G-Cter in ubiquitin) cross-link involves residue Lys-121.

The protein belongs to the histone H2B family. As to quaternary structure, the nucleosome is a histone octamer containing two molecules each of H2A, H2B, H3 and H4 assembled in one H3-H4 heterotetramer and two H2A-H2B heterodimers. The octamer wraps approximately 147 bp of DNA. Post-translationally, monoubiquitination of Lys-121 by the BRE1 gives a specific tag for epigenetic transcriptional activation and is also prerequisite for histone H3 'Lys-4' and 'Lys-79' methylation. Phosphorylated on Ser-15 during apoptosis; which facilitates apoptotic chromatin condensation. In terms of processing, glcNAcylation at Ser-113 promotes monoubiquitination of Lys-121. It fluctuates in response to extracellular glucose, and associates with transcribed genes.

The protein localises to the nucleus. It is found in the chromosome. Functionally, core component of nucleosome. Nucleosomes wrap and compact DNA into chromatin, limiting DNA accessibility to the cellular machineries which require DNA as a template. Histones thereby play a central role in transcription regulation, DNA repair, DNA replication and chromosomal stability. DNA accessibility is regulated via a complex set of post-translational modifications of histones, also called histone code, and nucleosome remodeling. The chain is Histone H2B 5 (H2B-V) from Gallus gallus (Chicken).